The sequence spans 520 residues: Maturase K (520 aa).

It belongs to the intron maturase 2 family. MatK subfamily.

It localises to the plastid. It is found in the chloroplast. Usually encoded in the trnK tRNA gene intron. Probably assists in splicing its own and other chloroplast group II introns. In Galanthus elwesii (Giant snowdrop), this protein is Maturase K.